A 231-amino-acid chain; its full sequence is Large ribosomal subunit protein uL1 (231 aa).

Belongs to the universal ribosomal protein uL1 family. In terms of assembly, part of the 50S ribosomal subunit.

Functionally, binds directly to 23S rRNA. The L1 stalk is quite mobile in the ribosome, and is involved in E site tRNA release. In terms of biological role, protein L1 is also a translational repressor protein, it controls the translation of the L11 operon by binding to its mRNA. In Pseudomonas syringae pv. syringae (strain B728a), this protein is Large ribosomal subunit protein uL1.